A 235-amino-acid chain; its full sequence is Large ribosomal subunit protein uL1 (235 aa).

Belongs to the universal ribosomal protein uL1 family. As to quaternary structure, part of the 50S ribosomal subunit.

Binds directly to 23S rRNA. The L1 stalk is quite mobile in the ribosome, and is involved in E site tRNA release. Functionally, protein L1 is also a translational repressor protein, it controls the translation of the L11 operon by binding to its mRNA. The chain is Large ribosomal subunit protein uL1 from Synechococcus sp. (strain CC9605).